A 106-amino-acid chain; its full sequence is PTS system fructose-like EIIB component 2 (106 aa).

In terms of domain architecture, PTS EIIB type-2 spans 1 to 103 (MTKIIAVTAC…IMSKIEAHLA (103 aa)). Cys-10 acts as the Phosphocysteine intermediate in catalysis. Cys-10 carries the post-translational modification Phosphocysteine; by EIIA.

It localises to the cytoplasm. It catalyses the reaction D-fructose(out) + N(pros)-phospho-L-histidyl-[protein] = D-fructose 1-phosphate(in) + L-histidyl-[protein]. In terms of biological role, the phosphoenolpyruvate-dependent sugar phosphotransferase system (sugar PTS), a major carbohydrate active transport system, catalyzes the phosphorylation of incoming sugar substrates concomitantly with their translocation across the cell membrane. The enzyme II FrwABC PTS system is involved in fructose transport. In Escherichia coli O157:H7, this protein is PTS system fructose-like EIIB component 2 (frwB).